The following is a 345-amino-acid chain: UDP-N-acetylenolpyruvoylglucosamine reductase (345 aa).

Positions 16 to 185 (VNAFAKSVVT…VSVGLRLCKK (170 aa)) constitute an FAD-binding PCMH-type domain. Residue Arg-162 is part of the active site. Ser-231 (proton donor) is an active-site residue. Glu-328 is an active-site residue.

The protein belongs to the MurB family. Requires FAD as cofactor.

The protein localises to the cytoplasm. The catalysed reaction is UDP-N-acetyl-alpha-D-muramate + NADP(+) = UDP-N-acetyl-3-O-(1-carboxyvinyl)-alpha-D-glucosamine + NADPH + H(+). The protein operates within cell wall biogenesis; peptidoglycan biosynthesis. In terms of biological role, cell wall formation. This is UDP-N-acetylenolpyruvoylglucosamine reductase from Blochmanniella pennsylvanica (strain BPEN).